Reading from the N-terminus, the 277-residue chain is Energy-coupling factor transporter ATP-binding protein EcfA1 (277 aa).

Positions leucine 5–aspartate 240 constitute an ABC transporter domain. Position 40–47 (glycine 40–serine 47) interacts with ATP. Glutamate 166 functions as the Proton acceptor in the catalytic mechanism.

This sequence belongs to the ABC transporter superfamily. Energy-coupling factor EcfA family. As to quaternary structure, forms a stable energy-coupling factor (ECF) transporter complex composed of 2 membrane-embedded substrate-binding proteins (S component), 2 ATP-binding proteins (A component) and 2 transmembrane proteins (T component). In L.lactis forms a stable complex with EcfA' and EcfT and substrate-binding components. In E.coli forms a stable complex with EcfA', EcfT and individually with 3 tested substrate-binding components (BioY, NiaX and ThiT) with a stoichiometry of 1.1:1:1. The core ECF complex interacts with a number of substrate-specific binding components, including BioY, BioY2, HmpT, NiaX, PanT, QueT, RibU and ThiT.

Its subcellular location is the cell membrane. ATP-binding (A) component of a common energy-coupling factor (ECF) ABC-transporter complex. Unlike classic ABC transporters this ECF transporter provides the energy necessary to transport a number of different substrates. In this organism these probably include biotin, thiamine precursor, niacin, pantothenic acid, queuosine precursor, riboflavin and thiamine. Uptake of niacin or riboflavin into proteosomes containing EcfA1A2T and Niax or RibU has been demonstrated. Uptake requires hydrolyzable Mg-ATP and is substrate-specific; NiaX-containing proteosomes did not transport riboflavin. This Lactococcus lactis subsp. cremoris (strain MG1363) protein is Energy-coupling factor transporter ATP-binding protein EcfA1.